The following is a 790-amino-acid chain: Pre-mRNA-splicing factor cwf3 (790 aa).

HAT repeat units lie at residues 12-44 (DLINVDDEPFELELLRDPYSLKSWLRYIKTHEG), 45-77 (STLEKRVLLFERACSELPGSYKIWKSYLELRVA), 89-121 (EAFASVNDCFERSLILLHKMPVIWKLYLQFLMK), 123-157 (PNVTKIRCTFNSALRALPVTQHDDIWDMFTKYAED), 159-190 (GGLFCIHVYRRYIQVEPRAIENYIEILCKLGL), 193-228 (EAARQYEDILNRPVFLSAKRKSNYQIWLEFSELVVQ), 233-266 (TQNIDVEKVFRAGIKRFSDQAGKLWTYLAQYYIR), 268-303 (GDYEKARSTFYEGMNNIMTVRNFTIIFDAFVEFEEQ), 331-364 (KILDKRPLYINDVLLRQNINNVDEWLRRVKFLED), 368-402 (KVVQVYTDAIKNVNPKLAHGSLGKLFSEFARFYEN), 404-440 (DDLEQSRIIFEKATHVPYKTVNELAQVWIDWAEMELR), 457-492 (APRKSHISFFDESLSPQVRLHKSSKIWMYYLDLEES), 494-526 (GTIETTRKLYDRVFELKIATPQVVVNYANLLEE), 528-562 (AYFEDSFKIYERGVALFSYPVAFELWNLYLTKFVK), 567-601 (THMERTRDLFEQALEGCPPEFSKSIYLLYADFEEK), 639-673 (YGVLATRTVYEKAIESLSDSEVKDMCLRFAEMETK), and 675-709 (GEIDRARLIYIHGSQYCDPRVETDYWKAWQEFEIR). The segment at 769 to 790 (LAGFVLSKSNPQETSKITGEEN) is disordered. Polar residues predominate over residues 775–790 (SKSNPQETSKITGEEN).

The protein belongs to the crooked-neck family. Belongs to the 40S cdc5-associated complex (or cwf complex), a spliceosome sub-complex reminiscent of a late-stage spliceosome composed of the U2, U5 and U6 snRNAs and at least brr2, cdc5, cwf2/prp3, cwf3/syf1, cwf4/syf3, cwf5/ecm2, spp42/cwf6, cwf7/spf27, cwf8, cwf9, cwf10, cwf11, cwf12, prp45/cwf13, cwf14, cwf15, cwf16, cwf17, cwf18, cwf19, cwf20, cwf21, cwf22, cwf23, cwf24, cwf25, cwf26, cyp7/cwf27, cwf28, cwf29/ist3, lea1, msl1, prp5/cwf1, prp10, prp12/sap130, prp17, prp22, sap61, sap62, sap114, sap145, slu7, smb1, smd1, smd3, smf1, smg1 and syf2.

Its subcellular location is the nucleus. Involved in pre-mRNA splicing and cell cycle progression. The chain is Pre-mRNA-splicing factor cwf3 (cwf3) from Schizosaccharomyces pombe (strain 972 / ATCC 24843) (Fission yeast).